The primary structure comprises 1486 residues: Chromosome partition protein MukB (1486 aa).

Position 34-41 (Gly-34–Ser-41) interacts with ATP. 3 coiled-coil regions span residues Leu-326–Gln-418, Leu-444–Gln-480, and Arg-509–Val-603. The segment at Pro-666–Arg-783 is flexible hinge. Coiled coils occupy residues Glu-835 to Glu-923, Glu-977 to Ala-1115, and Val-1209 to Val-1265.

Belongs to the SMC family. MukB subfamily. In terms of assembly, homodimerization via its hinge domain. Binds to DNA via its C-terminal region. Interacts, and probably forms a ternary complex, with MukE and MukF via its C-terminal region. The complex formation is stimulated by calcium or magnesium. Interacts with tubulin-related protein FtsZ.

The protein resides in the cytoplasm. The protein localises to the nucleoid. In terms of biological role, plays a central role in chromosome condensation, segregation and cell cycle progression. Functions as a homodimer, which is essential for chromosome partition. Involved in negative DNA supercoiling in vivo, and by this means organize and compact chromosomes. May achieve or facilitate chromosome segregation by condensation DNA from both sides of a centrally located replisome during cell division. This is Chromosome partition protein MukB from Escherichia coli O7:K1 (strain IAI39 / ExPEC).